Reading from the N-terminus, the 210-residue chain is Ribosomal RNA large subunit methyltransferase E (210 aa).

Residues Gly-61, Trp-63, Asp-81, Asp-97, and Asp-122 each coordinate S-adenosyl-L-methionine. Lys-162 serves as the catalytic Proton acceptor.

It belongs to the class I-like SAM-binding methyltransferase superfamily. RNA methyltransferase RlmE family.

The protein localises to the cytoplasm. The catalysed reaction is uridine(2552) in 23S rRNA + S-adenosyl-L-methionine = 2'-O-methyluridine(2552) in 23S rRNA + S-adenosyl-L-homocysteine + H(+). Specifically methylates the uridine in position 2552 of 23S rRNA at the 2'-O position of the ribose in the fully assembled 50S ribosomal subunit. The protein is Ribosomal RNA large subunit methyltransferase E of Xanthomonas axonopodis pv. citri (strain 306).